A 376-amino-acid polypeptide reads, in one-letter code: Queuine tRNA-ribosyltransferase (376 aa).

The Proton acceptor role is filled by D89. Residues 89–93 (DSGGF), D143, Q194, and G221 each bind substrate. Residues 252-258 (GVGTPAN) are RNA binding. D271 serves as the catalytic Nucleophile. C309, C311, C314, and H340 together coordinate Zn(2+).

It belongs to the queuine tRNA-ribosyltransferase family. In terms of assembly, homodimer. Within each dimer, one monomer is responsible for RNA recognition and catalysis, while the other monomer binds to the replacement base PreQ1. The cofactor is Zn(2+).

The catalysed reaction is 7-aminomethyl-7-carbaguanine + guanosine(34) in tRNA = 7-aminomethyl-7-carbaguanosine(34) in tRNA + guanine. Its pathway is tRNA modification; tRNA-queuosine biosynthesis. Its function is as follows. Catalyzes the base-exchange of a guanine (G) residue with the queuine precursor 7-aminomethyl-7-deazaguanine (PreQ1) at position 34 (anticodon wobble position) in tRNAs with GU(N) anticodons (tRNA-Asp, -Asn, -His and -Tyr). Catalysis occurs through a double-displacement mechanism. The nucleophile active site attacks the C1' of nucleotide 34 to detach the guanine base from the RNA, forming a covalent enzyme-RNA intermediate. The proton acceptor active site deprotonates the incoming PreQ1, allowing a nucleophilic attack on the C1' of the ribose to form the product. After dissociation, two additional enzymatic reactions on the tRNA convert PreQ1 to queuine (Q), resulting in the hypermodified nucleoside queuosine (7-(((4,5-cis-dihydroxy-2-cyclopenten-1-yl)amino)methyl)-7-deazaguanosine). In Clostridium kluyveri (strain NBRC 12016), this protein is Queuine tRNA-ribosyltransferase.